The chain runs to 270 residues: NAD kinase (270 aa).

Asp-45 acts as the Proton acceptor in catalysis. NAD(+) is bound by residues 45–46 (DG), 121–122 (NE), Arg-147, Asp-149, 160–165 (TAYSKS), and Ala-184.

It belongs to the NAD kinase family. Requires a divalent metal cation as cofactor.

It is found in the cytoplasm. The enzyme catalyses NAD(+) + ATP = ADP + NADP(+) + H(+). Its function is as follows. Involved in the regulation of the intracellular balance of NAD and NADP, and is a key enzyme in the biosynthesis of NADP. Catalyzes specifically the phosphorylation on 2'-hydroxyl of the adenosine moiety of NAD to yield NADP. The chain is NAD kinase from Lactobacillus helveticus (strain DPC 4571).